Consider the following 216-residue polypeptide: DNA gyrase subunit B (216 aa).

The Toprim domain maps to 140-216; it reads SELYLVEGDS…PDKLRYHKII (77 aa).

The protein belongs to the type II topoisomerase GyrB family. In terms of assembly, heterotetramer, composed of two GyrA and two GyrB chains. In the heterotetramer, GyrA contains the active site tyrosine that forms a transient covalent intermediate with DNA, while GyrB binds cofactors and catalyzes ATP hydrolysis.

The protein resides in the cytoplasm. The enzyme catalyses ATP-dependent breakage, passage and rejoining of double-stranded DNA.. In terms of biological role, a type II topoisomerase that negatively supercoils closed circular double-stranded (ds) DNA in an ATP-dependent manner to modulate DNA topology and maintain chromosomes in an underwound state. Negative supercoiling favors strand separation, and DNA replication, transcription, recombination and repair, all of which involve strand separation. Also able to catalyze the interconversion of other topological isomers of dsDNA rings, including catenanes and knotted rings. Type II topoisomerases break and join 2 DNA strands simultaneously in an ATP-dependent manner. The polypeptide is DNA gyrase subunit B (gyrB) (Acinetobacter bereziniae (Acinetobacter genomosp. 10)).